The primary structure comprises 197 residues: Putative RING-H2 finger protein ATL71 (197 aa).

A helical transmembrane segment spans residues 20-40; the sequence is MGGLAYGIGVSIGILMLITTI. The interval 53–80 is disordered; the sequence is SASPTTTPRTRRRQRESNGTLPPGQERF. Residues 129–171 form an RING-type; atypical zinc finger; that stretch reads CSICLADYKKMDMIRVLPDCNHLFHDNCVDPWLRLHPTCPVCR.

The protein belongs to the RING-type zinc finger family. ATL subfamily.

It is found in the membrane. The catalysed reaction is S-ubiquitinyl-[E2 ubiquitin-conjugating enzyme]-L-cysteine + [acceptor protein]-L-lysine = [E2 ubiquitin-conjugating enzyme]-L-cysteine + N(6)-ubiquitinyl-[acceptor protein]-L-lysine.. It functions in the pathway protein modification; protein ubiquitination. This chain is Putative RING-H2 finger protein ATL71 (ATL71), found in Arabidopsis thaliana (Mouse-ear cress).